The following is a 91-amino-acid chain: Elongation factor 1-beta (91 aa).

It belongs to the EF-1-beta/EF-1-delta family.

Its function is as follows. Promotes the exchange of GDP for GTP in EF-1-alpha/GDP, thus allowing the regeneration of EF-1-alpha/GTP that could then be used to form the ternary complex EF-1-alpha/GTP/AAtRNA. The chain is Elongation factor 1-beta from Thermococcus kodakarensis (strain ATCC BAA-918 / JCM 12380 / KOD1) (Pyrococcus kodakaraensis (strain KOD1)).